The following is a 611-amino-acid chain: Procollagen galactosyltransferase 1-B (611 aa).

Residues methionine 1 to alanine 24 form the signal peptide. Asparagine 85, asparagine 173, asparagine 370, asparagine 373, and asparagine 568 each carry an N-linked (GlcNAc...) asparagine glycan. The segment covering aspartate 576–serine 591 has biased composition (basic and acidic residues). The interval aspartate 576–leucine 611 is disordered. A Prevents secretion from ER motif is present at residues arginine 608–leucine 611.

This sequence belongs to the glycosyltransferase 25 family.

It is found in the endoplasmic reticulum lumen. The catalysed reaction is (5R)-5-hydroxy-L-lysyl-[collagen] + UDP-alpha-D-galactose = (5R)-5-O-(beta-D-galactosyl)-5-hydroxy-L-lysyl-[collagen] + UDP + H(+). Functionally, beta-galactosyltransferase that transfers beta-galactose to hydroxylysine residues of type I collagen. By acting on collagen glycosylation, facilitates the formation of collagen triple helix. The chain is Procollagen galactosyltransferase 1-B (colgalt1-b) from Xenopus laevis (African clawed frog).